Here is an 817-residue protein sequence, read N- to C-terminus: Phosphoenolpyruvate synthase (817 aa).

The Tele-phosphohistidine intermediate role is filled by H442. R540, R587, E684, G706, T707, N708, and D709 together coordinate substrate. E684 lines the Mg(2+) pocket. A Mg(2+)-binding site is contributed by D709. C756 acts as the Proton donor in catalysis.

This sequence belongs to the PEP-utilizing enzyme family. As to quaternary structure, homooctamer. The cofactor is Mg(2+).

The catalysed reaction is pyruvate + ATP + H2O = phosphoenolpyruvate + AMP + phosphate + 2 H(+). Its pathway is carbohydrate biosynthesis; gluconeogenesis. Catalyzes the phosphorylation of pyruvate to phosphoenolpyruvate. This is Phosphoenolpyruvate synthase (ppsA) from Pyrococcus furiosus (strain ATCC 43587 / DSM 3638 / JCM 8422 / Vc1).